The sequence spans 1489 residues: Type-2 histone deacetylase 1 (1489 aa).

Low complexity-rich tracts occupy residues 135–163, 190–259, 281–306, and 325–399; these read NNNN…SPSG, SNGN…SRNL, NIIN…TSTT, and SPTS…NINN. 5 disordered regions span residues 135–259, 281–556, 915–935, 955–1024, and 1151–1185; these read NNNN…SRNL, NIIN…NYQQ, NNNN…DDQL, NISK…RDRD, and STGI…GEQC. The span at 400 to 430 shows a compositional bias: polar residues; sequence VANGTPRPSLQTSRLQGKLPSPQQYNTSPSH. 4 stretches are compositionally biased toward low complexity: residues 431–450, 486–553, 915–928, and 959–988; these read QQYP…PIQS, NNNN…NNSN, and NNNN…NNNN. Basic and acidic residues-rich tracts occupy residues 989-1001 and 1010-1024; these read RNRD…ERDN and IEKE…RDRD. The segment covering 1158–1180 has biased composition (low complexity); it reads STSTPITTTGTATVTPGSTTSST. His1232 acts as the Proton acceptor in catalysis. A compositionally biased stretch (acidic residues) spans 1325-1335; sequence EQNDYDDDDNN. The interval 1325-1374 is disordered; sequence EQNDYDDDDNNNDVNNNNNNNNNNNNNNNNNNNNKNNNNNNSNSITQQST. Positions 1336–1367 are enriched in low complexity; that stretch reads NDVNNNNNNNNNNNNNNNNNNNNKNNNNNNSN.

Belongs to the histone deacetylase family. HD type 2 subfamily.

The protein resides in the nucleus. It is found in the cytoplasm. It carries out the reaction N(6)-acetyl-L-lysyl-[histone] + H2O = L-lysyl-[histone] + acetate. In terms of biological role, responsible for the deacetylation of lysine residues on the N-terminal part of the core histones (H2A, H2B, H3 and H4). Histone deacetylation plays an important role in transcriptional regulation, cell cycle progression and developmental events. Histone deacetylases act via the formation of large multiprotein complexes. The chain is Type-2 histone deacetylase 1 (hdaD) from Dictyostelium discoideum (Social amoeba).